The following is a 660-amino-acid chain: Junctophilin-1 (660 aa).

Over 1–638 the chain is Cytoplasmic; the sequence is MTGGRFDFDD…EKEANSGPNS (638 aa). 5 MORN repeats span residues 14–36, 38–59, 60–82, 106–128, and 129–151; these read YCGG…KGQG, YSGS…SGNT, YQGY…KWMY, YEGT…DGGT, and YQGQ…PYGM. Residues Ser-157, Ser-216, and Ser-220 each carry the phosphoserine modification. The disordered stretch occupies residues 228–247; it reads SKSSISSKRSSVRSDAAMSR. MORN repeat units follow at residues 281–303 and 304–326; these read YMGE…NGMK and YEGE…DGSK. Residues 437–454 are compositionally biased toward basic and acidic residues; that stretch reads NPEEKVLEKPPSPKESPH. The disordered stretch occupies residues 437–631; the sequence is NPEEKVLEKP…NDTCPSLEKE (195 aa). Residue Ser-452 is modified to Phosphoserine. Position 461 is a phosphothreonine (Thr-461). 3 positions are modified to phosphoserine: Ser-465, Ser-469, and Ser-475. The span at 466–477 shows a compositional bias: low complexity; sequence PESSPKQSHSPQ. Composition is skewed to basic and acidic residues over residues 562–571 and 598–612; these read PPEDREDDRG and VAKE…KKSE. Residues 639 to 659 traverse the membrane as a helical; Anchor for type IV membrane protein segment; sequence IMIVLVMLLNIGLAILFVHFL.

It belongs to the junctophilin family. As to expression, specifically expressed in skeletal muscle. Weakly expressed in embryos and neonates. Abundant in young adult muscles.

The protein localises to the cell membrane. Its subcellular location is the endoplasmic reticulum membrane. The protein resides in the sarcoplasmic reticulum membrane. Functionally, junctophilins contribute to the formation of junctional membrane complexes (JMCs) which link the plasma membrane with the endoplasmic or sarcoplasmic reticulum in excitable cells. Provides a structural foundation for functional cross-talk between the cell surface and intracellular calcium release channels. JPH1 contributes to the construction of the skeletal muscle triad by linking the t-tubule (transverse-tubule) and SR (sarcoplasmic reticulum) membranes. The chain is Junctophilin-1 (Jph1) from Mus musculus (Mouse).